Reading from the N-terminus, the 167-residue chain is Large ribosomal subunit protein bL9 (167 aa).

The protein belongs to the bacterial ribosomal protein bL9 family.

In terms of biological role, binds to the 23S rRNA. This chain is Large ribosomal subunit protein bL9, found in Nitratidesulfovibrio vulgaris (strain DSM 19637 / Miyazaki F) (Desulfovibrio vulgaris).